The chain runs to 288 residues: Light-independent protochlorophyllide reductase iron-sulfur ATP-binding protein (288 aa).

ATP is bound by residues 12–17 and K41; that span reads GIGKST. S16 provides a ligand contact to Mg(2+). Positions 97 and 131 each coordinate [4Fe-4S] cluster. 182-183 serves as a coordination point for ATP; it reads NR.

It belongs to the NifH/BchL/ChlL family. Homodimer. Protochlorophyllide reductase is composed of three subunits; ChlL, ChlN and ChlB. [4Fe-4S] cluster serves as cofactor.

It carries out the reaction chlorophyllide a + oxidized 2[4Fe-4S]-[ferredoxin] + 2 ADP + 2 phosphate = protochlorophyllide a + reduced 2[4Fe-4S]-[ferredoxin] + 2 ATP + 2 H2O. It functions in the pathway porphyrin-containing compound metabolism; chlorophyll biosynthesis (light-independent). Component of the dark-operative protochlorophyllide reductase (DPOR) that uses Mg-ATP and reduced ferredoxin to reduce ring D of protochlorophyllide (Pchlide) to form chlorophyllide a (Chlide). This reaction is light-independent. The L component serves as a unique electron donor to the NB-component of the complex, and binds Mg-ATP. This chain is Light-independent protochlorophyllide reductase iron-sulfur ATP-binding protein, found in Picosynechococcus sp. (strain ATCC 27264 / PCC 7002 / PR-6) (Agmenellum quadruplicatum).